The primary structure comprises 232 residues: BTB/POZ domain-containing protein KCTD11 (232 aa).

The region spanning 1 to 49 (MLGAMFRADTLMPANLNPQGDGHYFIDRDGKAFRHILNFLRLGRLDLPR) is the BTB domain.

In terms of assembly, homopentamer. Interacts with KCTD6 and KCTD21; KCTD11 and KCTD6 or KCTD21 may associate in pentameric assemblies. Component of the BCR(KCTD11) E3 ubiquitin ligase complex, at least composed of CUL3 and KCTD11 and RBX1. Interacts (via BTB domain) with CUL3; initially a 4:4 stoichiometry has been reported, however, electron microscopy revealed pentameric states of the BTB domain. In terms of tissue distribution, weakly expressed in lung. In the cerebellum, higher expression in non proliferating external granule cells layer than in highly proliferating ones.

It functions in the pathway protein modification; protein ubiquitination. In terms of biological role, plays a role as a marker and a regulator of neuronal differentiation; Up-regulated by a variety of neurogenic signals, such as retinoic acid, epidermal growth factor/EGF and NGFB/nerve growth factor. Induces apoptosis, growth arrest and the expression of cyclin-dependent kinase inhibitor CDKN1B. Plays a role as a tumor repressor and inhibits cell growth and tumorigenicity of medulloblastoma (MDB). Acts as a probable substrate-specific adapter for a BCR (BTB-CUL3-RBX1) E3 ubiquitin-protein ligase complex towards HDAC1. Functions as antagonist of the Hedgehog pathway on cell proliferation and differentiation by affecting the nuclear transfer of transcription factor GLI1, thus maintaining cerebellar granule cells in undifferentiated state, this effect probably occurs via HDAC1 down-regulation, keeping GLI1 acetylated and inactive. When knock-down, Hedgehog antagonism is impaired and proliferation of granule cells is sustained. Activates the caspase cascade. This chain is BTB/POZ domain-containing protein KCTD11 (Kctd11), found in Mus musculus (Mouse).